The chain runs to 278 residues: Elongation factor Ts (278 aa).

An involved in Mg(2+) ion dislocation from EF-Tu region spans residues 82 to 85 (TEPV).

It belongs to the EF-Ts family.

The protein localises to the cytoplasm. Its function is as follows. Associates with the EF-Tu.GDP complex and induces the exchange of GDP to GTP. It remains bound to the aminoacyl-tRNA.EF-Tu.GTP complex up to the GTP hydrolysis stage on the ribosome. The protein is Elongation factor Ts of Cytophaga hutchinsonii (strain ATCC 33406 / DSM 1761 / CIP 103989 / NBRC 15051 / NCIMB 9469 / D465).